The following is a 1176-amino-acid chain: Myosin light chain kinase, smooth muscle (1176 aa).

The segment at 1–41 is actin-binding (calcium/calmodulin-sensitive); it reads MDFRANLQRQVKPKTLSEEERKVHGPQQVDFRSVLAKKGTP. Positions 1–354 are disordered; sequence MDFRANLQRQ…SEKRPESRGT (354 aa). The tract at residues 26–41 is calmodulin-binding; that stretch reads PQQVDFRSVLAKKGTP. Over residues 43 to 55 the composition is skewed to pro residues; the sequence is TPVPEKVPPPKPA. 16 tandem repeats follow at residues 100-111, 112-123, 124-135, 136-147, 148-159, 160-171, 172-183, 184-195, 196-207, 208-219, 220-231, 232-243, 244-255, 256-267, 268-279, and 280-291. The segment at 100–291 is 16 X 12 AA tandem repeats; sequence FLKPVGNAKL…KLVGNAKPAE (192 aa). Position 202 is a phosphoserine (serine 202). The interval 319-721 is actin-binding (calcium/calmodulin-insensitive); sequence PTGKEELKKE…TVTVNTEQKV (403 aa). A compositionally biased stretch (basic and acidic residues) spans 320-335; sequence TGKEELKKEIKNDVNC. The region spanning 356–444 is the Ig-like C2-type 1 domain; that stretch reads PTFEEKLQDL…GQAESSCQVT (89 aa). The cysteines at positions 377 and 428 are disulfide-linked. The tract at residues 448 to 497 is disordered; that stretch reads PDAPTSENAKAPEMKARRPKSSLPPVLGTESDATVKKKPAPKTPPKAAMP. The 89-residue stretch at 498–586 folds into the Ig-like C2-type 2 domain; that stretch reads PQIIQFPEDQ…GSRQAQVNLT (89 aa). One can recognise a Fibronectin type-III domain in the interval 594–686; the sequence is PAGTPCASDI…QESELTALGE (93 aa). The tract at residues 673 to 707 is disordered; it reads SEPSQESELTALGEKPEEEPKDEVEVSDDDEKEPE. The span at 688-706 shows a compositional bias: acidic residues; sequence PEEEPKDEVEVSDDDEKEP. Phosphoserine is present on serine 699. The residue at position 710 (tyrosine 710) is a Phosphotyrosine; by ABL1. In terms of domain architecture, Protein kinase spans 725–980; it reads YDIEERLGSG…CTQCLQHPWL (256 aa). ATP contacts are provided by residues 731–739 and lysine 754; that span reads LGSGKFGQV. Tyrosine 836 is subject to Phosphotyrosine; by ABL1. Aspartate 846 serves as the catalytic Proton acceptor. Position 896 is a phosphotyrosine; by ABL1 (tyrosine 896). The calmodulin-binding stretch occupies residues 972-1035; the sequence is TQCLQHPWLM…SGLSGRKSST (64 aa). Phosphoserine occurs at positions 1020, 1021, 1033, 1034, and 1037. Threonine 1039 is modified (phosphothreonine). A Phosphoserine modification is found at serine 1040. The region spanning 1069-1158 is the Ig-like C2-type 3 domain; it reads PYFSKTIRDL…GEATCTAELI (90 aa). Cysteine 1090 and cysteine 1142 form a disulfide bridge.

It belongs to the protein kinase superfamily. CAMK Ser/Thr protein kinase family. In terms of assembly, all isoforms including Telokin bind calmodulin. Interacts with SVIL. Interacts with CTTN; this interaction is reduced during thrombin-induced endothelial cell (EC) contraction but is promoted by the barrier-protective agonist sphingosine 1-phosphate (S1P) within lamellipodia. A complex made of ABL1, CTTN and MYLK regulates cortical actin-based cytoskeletal rearrangement critical to sphingosine 1-phosphate (S1P)-mediated endothelial cell (EC) barrier enhancement. Binds to NAA10/ARD1 and PTK2B/PYK2. The cofactor is Mg(2+). Ca(2+) serves as cofactor. The C-terminus is deglutamylated by AGTPBP1/CCP1, AGBL1/CCP4 and AGBL4/CCP6, leading to the formation of Myosin light chain kinase, smooth muscle, deglutamylated form. The consequences of C-terminal deglutamylation are unknown. Post-translationally, can probably be down-regulated by phosphorylation. Tyrosine phosphorylation by ABL1 increases kinase activity, reverses MLCK-mediated inhibition of Arp2/3-mediated actin polymerization, and enhances CTTN-binding. Phosphorylation by SRC promotes CTTN binding.

Its subcellular location is the cytoplasm. The protein resides in the cell projection. The protein localises to the lamellipodium. It localises to the cleavage furrow. It is found in the cytoskeleton. Its subcellular location is the stress fiber. The catalysed reaction is L-seryl-[myosin light chain] + ATP = O-phospho-L-seryl-[myosin light chain] + ADP + H(+). It carries out the reaction L-threonyl-[myosin light chain] + ATP = O-phospho-L-threonyl-[myosin light chain] + ADP + H(+). In terms of biological role, calcium/calmodulin-dependent myosin light chain kinase implicated in smooth muscle contraction via phosphorylation of myosin light chains (MLC). Also regulates actin-myosin interaction through a non-kinase activity. Phosphorylates PTK2B/PYK2 and myosin light-chains. Involved in the inflammatory response (e.g. apoptosis, vascular permeability, leukocyte diapedesis), cell motility and morphology, airway hyperreactivity and other activities relevant to asthma. Required for tonic airway smooth muscle contraction that is necessary for physiological and asthmatic airway resistance. Necessary for gastrointestinal motility. Implicated in the regulation of endothelial as well as vascular permeability, probably via the regulation of cytoskeletal rearrangements. In the nervous system it has been shown to control the growth initiation of astrocytic processes in culture and to participate in transmitter release at synapses formed between cultured sympathetic ganglion cells. Critical participant in signaling sequences that result in fibroblast apoptosis. Plays a role in the regulation of epithelial cell survival. Required for epithelial wound healing, especially during actomyosin ring contraction during purse-string wound closure. Mediates RhoA-dependent membrane blebbing. Triggers TRPC5 channel activity in a calcium-dependent signaling, by inducing its subcellular localization at the plasma membrane. Promotes cell migration (including tumor cells) and tumor metastasis. PTK2B/PYK2 activation by phosphorylation mediates ITGB2 activation and is thus essential to trigger neutrophil transmigration during acute lung injury (ALI). May regulate optic nerve head astrocyte migration. Probably involved in mitotic cytoskeletal regulation. Regulates tight junction probably by modulating ZO-1 exchange in the perijunctional actomyosin ring. Mediates burn-induced microvascular barrier injury; triggers endothelial contraction in the development of microvascular hyperpermeability by phosphorylating MLC. Essential for intestinal barrier dysfunction. Mediates Giardia spp.-mediated reduced epithelial barrier function during giardiasis intestinal infection via reorganization of cytoskeletal F-actin and tight junctional ZO-1. Necessary for hypotonicity-induced Ca(2+) entry and subsequent activation of volume-sensitive organic osmolyte/anion channels (VSOAC) in cervical cancer cells. The protein is Myosin light chain kinase, smooth muscle (MYLK) of Bos taurus (Bovine).